We begin with the raw amino-acid sequence, 138 residues long: Small ribosomal subunit protein uS12 (138 aa).

Position 89 is a 3-methylthioaspartic acid (D89). The interval 101 to 138 (ALDTAGTQNRNQGRSKYGTKRPKKGAATAAKGPVKGKK) is disordered. Residues 105 to 114 (AGTQNRNQGR) show a composition bias toward polar residues. Positions 125-138 (GAATAAKGPVKGKK) are enriched in low complexity.

Belongs to the universal ribosomal protein uS12 family. In terms of assembly, part of the 30S ribosomal subunit. Contacts proteins S8 and S17. May interact with IF1 in the 30S initiation complex.

Its function is as follows. With S4 and S5 plays an important role in translational accuracy. Functionally, interacts with and stabilizes bases of the 16S rRNA that are involved in tRNA selection in the A site and with the mRNA backbone. Located at the interface of the 30S and 50S subunits, it traverses the body of the 30S subunit contacting proteins on the other side and probably holding the rRNA structure together. The combined cluster of proteins S8, S12 and S17 appears to hold together the shoulder and platform of the 30S subunit. In Heliobacterium modesticaldum (strain ATCC 51547 / Ice1), this protein is Small ribosomal subunit protein uS12.